The chain runs to 233 residues: Probable transglycosylase IsaA (233 aa).

Positions 1 to 29 (MKKTIMASSLAVALGVTGYAASTGHEAHA) are cleaved as a signal peptide.

This sequence belongs to the transglycosylase family. IsaA subfamily.

Its subcellular location is the secreted. Its function is as follows. Is able to cleave peptidoglycan. The polypeptide is Probable transglycosylase IsaA (isaA) (Staphylococcus aureus (strain bovine RF122 / ET3-1)).